A 215-amino-acid polypeptide reads, in one-letter code: Guanylate kinase (215 aa).

Residues 6–185 (GAILVLSGPS…SEKLLLSIAR (180 aa)) form the Guanylate kinase-like domain. 13 to 20 (GPSGSGKS) is an ATP binding site.

The protein belongs to the guanylate kinase family.

The protein resides in the cytoplasm. It catalyses the reaction GMP + ATP = GDP + ADP. Its function is as follows. Essential for recycling GMP and indirectly, cGMP. This is Guanylate kinase from Wolinella succinogenes (strain ATCC 29543 / DSM 1740 / CCUG 13145 / JCM 31913 / LMG 7466 / NCTC 11488 / FDC 602W) (Vibrio succinogenes).